Here is a 596-residue protein sequence, read N- to C-terminus: Phosphoenolpyruvate carboxykinase [GTP] (596 aa).

Residues arginine 77 and 205–207 (YGG) contribute to the substrate site. 2 residues coordinate Mn(2+): lysine 214 and histidine 234. Residue serine 256 coordinates substrate. 257–262 (ACGKTN) provides a ligand contact to GTP. The active site involves cysteine 258. Residue aspartate 283 participates in Mn(2+) binding. Residues 362–388 (KKGSTEKAAHPNSRFTAPAKNNPAISP) form a disordered region. 373-375 (NSR) provides a ligand contact to substrate. GTP contacts are provided by residues arginine 375, arginine 406, and 499–502 (YGDN).

Belongs to the phosphoenolpyruvate carboxykinase [GTP] family. Monomer. It depends on Mn(2+) as a cofactor.

The protein resides in the cytoplasm. It carries out the reaction oxaloacetate + GTP = phosphoenolpyruvate + GDP + CO2. It functions in the pathway carbohydrate biosynthesis; gluconeogenesis. Catalyzes the conversion of oxaloacetate (OAA) to phosphoenolpyruvate (PEP), the rate-limiting step in the metabolic pathway that produces glucose from lactate and other precursors derived from the citric acid cycle. This is Phosphoenolpyruvate carboxykinase [GTP] from Anaeromyxobacter sp. (strain K).